The chain runs to 96 residues: Transmembrane protein PMIS2 (96 aa).

Transmembrane regions (helical) follow at residues 31-51 and 76-96; these read VMLA…AIYF and WFNM…VLVL.

The protein belongs to the CD225/Dispanin family. As to expression, specifically expressed in testis.

It localises to the membrane. Its function is as follows. May play a role in spermatozoa mobility. This chain is Transmembrane protein PMIS2, found in Mus musculus (Mouse).